We begin with the raw amino-acid sequence, 376 residues long: 23S rRNA (uracil(747)-C(5))-methyltransferase RlmC (376 aa).

Residues Cys-3, Cys-11, Cys-14, and Cys-87 each contribute to the [4Fe-4S] cluster site. Gln-212, Phe-241, Glu-262, and Asn-307 together coordinate S-adenosyl-L-methionine. The Nucleophile role is filled by Cys-334.

The protein belongs to the class I-like SAM-binding methyltransferase superfamily. RNA M5U methyltransferase family. RlmC subfamily.

It catalyses the reaction uridine(747) in 23S rRNA + S-adenosyl-L-methionine = 5-methyluridine(747) in 23S rRNA + S-adenosyl-L-homocysteine + H(+). Its function is as follows. Catalyzes the formation of 5-methyl-uridine at position 747 (m5U747) in 23S rRNA. This chain is 23S rRNA (uracil(747)-C(5))-methyltransferase RlmC, found in Yersinia pestis bv. Antiqua (strain Antiqua).